A 320-amino-acid polypeptide reads, in one-letter code: Phospho-N-acetylmuramoyl-pentapeptide-transferase (320 aa).

10 consecutive transmembrane segments (helical) span residues 7-27 (ILAI…VIPF), 50-70 (GTPT…SLIF), 77-97 (IGAP…DDFI), 113-133 (LVLQ…HLGS), 148-168 (WAYV…VNLT), 173-193 (GLAS…SIFS), 198-216 (MAIF…LRYN), 221-241 (VVFM…AIAV), 247-267 (VLVL…MLQV), and 297-317 (VVVV…AMIQ).

The protein belongs to the glycosyltransferase 4 family. MraY subfamily. Requires Mg(2+) as cofactor.

The protein resides in the cell membrane. It carries out the reaction UDP-N-acetyl-alpha-D-muramoyl-L-alanyl-gamma-D-glutamyl-meso-2,6-diaminopimeloyl-D-alanyl-D-alanine + di-trans,octa-cis-undecaprenyl phosphate = di-trans,octa-cis-undecaprenyl diphospho-N-acetyl-alpha-D-muramoyl-L-alanyl-D-glutamyl-meso-2,6-diaminopimeloyl-D-alanyl-D-alanine + UMP. It participates in cell wall biogenesis; peptidoglycan biosynthesis. In terms of biological role, catalyzes the initial step of the lipid cycle reactions in the biosynthesis of the cell wall peptidoglycan: transfers peptidoglycan precursor phospho-MurNAc-pentapeptide from UDP-MurNAc-pentapeptide onto the lipid carrier undecaprenyl phosphate, yielding undecaprenyl-pyrophosphoryl-MurNAc-pentapeptide, known as lipid I. The polypeptide is Phospho-N-acetylmuramoyl-pentapeptide-transferase (Caldicellulosiruptor bescii (strain ATCC BAA-1888 / DSM 6725 / KCTC 15123 / Z-1320) (Anaerocellum thermophilum)).